A 147-amino-acid polypeptide reads, in one-letter code: Hemoglobin subunit gamma-1 (147 aa).

Glycine 2 bears the N-acetylglycine mark. A Globin domain is found at 3–147 (HFTEEDKATI…VASALSSRYH (145 aa)). A Phosphothreonine modification is found at threonine 13. Serine 45, serine 51, and serine 53 each carry phosphoserine. Lysine 60 carries the post-translational modification N6-acetyllysine. Histidine 64 serves as a coordination point for heme b. Lysine 83 bears the N6-acetyllysine mark. Histidine 93 contributes to the heme b binding site. An S-nitrosocysteine modification is found at cysteine 94. At serine 140 the chain carries Phosphoserine.

This sequence belongs to the globin family. Heterotetramer of two alpha chains and two gamma chains in fetal hemoglobin (Hb F). As to expression, red blood cells.

Functionally, gamma chains make up the fetal hemoglobin F, in combination with alpha chains. The chain is Hemoglobin subunit gamma-1 (HBG1) from Pongo pygmaeus (Bornean orangutan).